A 342-amino-acid chain; its full sequence is Ion-translocating oxidoreductase complex subunit D (342 aa).

Helical transmembrane passes span 42-62 (GSVI…ALFL), 68-90 (NIAF…LALP), and 124-144 (AMVG…QWLA). Threonine 171 is modified (FMN phosphoryl threonine). 5 helical membrane passes run 200–220 (FAGL…LYLI), 227–247 (WHIP…AWLI), 252–272 (FADP…FFIA), 286–306 (LVYA…GGYP), and 308–328 (AVAF…YYTQ).

This sequence belongs to the NqrB/RnfD family. As to quaternary structure, the complex is composed of six subunits: RnfA, RnfB, RnfC, RnfD, RnfE and RnfG. FMN serves as cofactor.

Its subcellular location is the cell inner membrane. Part of a membrane-bound complex that couples electron transfer with translocation of ions across the membrane. This chain is Ion-translocating oxidoreductase complex subunit D, found in Alcanivorax borkumensis (strain ATCC 700651 / DSM 11573 / NCIMB 13689 / SK2).